The sequence spans 100 residues: RxLR effector protein SFI8 (100 aa).

Positions 1–22 (MRSILYAVLAFAVLARSSAVAA) are cleaved as a signal peptide. Residues 43–57 (RSLRVEAQEVIQSGR) carry the RxLR-dEER motif. Residues 78 to 82 (KPDIK) carry the Calmodulin-binding motif motif.

Belongs to the RxLR effector family. Interacts with the host calmodulin.

Its subcellular location is the secreted. It is found in the host nucleus. The protein localises to the host cytoplasm. Functionally, effector that suppresses flg22-induced post-translational MAP kinase activation both tomato and Arabidopsis. The perception of highly conserved pathogen- or microbe-associated molecular patterns (PAMPs/MAMPs), such as flg22, triggers converging signaling pathways recruiting MAP kinase cascades and inducing transcriptional re-programming, yielding a generic antimicrobial response. Associates with calmodulin to interfere with plant defense-associated calcium signaling in hosts. In Phytophthora infestans (strain T30-4) (Potato late blight agent), this protein is RxLR effector protein SFI8.